The sequence spans 91 residues: Sec-independent protein translocase protein TatA (91 aa).

The chain crosses the membrane as a helical span at residues 1–21 (MGIFDWKHWIVILIVVVLVFG). A disordered region spans residues 42 to 91 (AMNDDDKPAEQPAPQPQQAQAAPQGSPLNQPHTIDAQAHKVDEPIRKDQV). A compositionally biased stretch (low complexity) spans 51–65 (EQPAPQPQQAQAAPQ). Residues 78 to 91 (QAHKVDEPIRKDQV) show a composition bias toward basic and acidic residues.

Belongs to the TatA/E family. In terms of assembly, the Tat system comprises two distinct complexes: a TatABC complex, containing multiple copies of TatA, TatB and TatC subunits, and a separate TatA complex, containing only TatA subunits. Substrates initially bind to the TatABC complex, which probably triggers association of the separate TatA complex to form the active translocon.

The protein localises to the cell inner membrane. Functionally, part of the twin-arginine translocation (Tat) system that transports large folded proteins containing a characteristic twin-arginine motif in their signal peptide across membranes. TatA could form the protein-conducting channel of the Tat system. The chain is Sec-independent protein translocase protein TatA from Pseudomonas savastanoi pv. phaseolicola (strain 1448A / Race 6) (Pseudomonas syringae pv. phaseolicola (strain 1448A / Race 6)).